A 168-amino-acid chain; its full sequence is DAZ-associated protein 2 (168 aa).

Low complexity predominate over residues 1–13 (MNSKGQYPTQPTY). The segment at 1 to 25 (MNSKGQYPTQPTYPVQPPGNPVYPQ) is disordered. The short motif at 39 to 42 (PPAY) is the PPAY element. A Phosphoserine modification is found at Ser-77.

As to quaternary structure, interacts with SOX6. Interacts with DAZ1 and DAZL. Interacts with IL17RB. May interact with FAM168B. Interacts with INCA1. Interacts with EIF4G1 and EIF4G2. Interacts (via PPAY motif) with NEDD4 (via WW domains). Interacts with transcription factor TCF4; the interaction results in localization of DAZAP2 to the nucleus. Interacts with transcription factors TCF7 and TCF7L1. Interacts with transcription factor LEF1. Interacts with serine/threonine-protein kinase HIPK2; the interaction results in phosphorylation of DAZAP2 which causes localization of DAZAP2 to the nucleus, reduces interaction of DAZAP2 with HIPK2 and prevents DAZAP2-dependent degradation of HIPK2. Interacts with ubiquitin ligase SIAH1; the interaction is decreased following phosphorylation of DAZAP2 by HIPK2. Interacts with TP53; the interaction is triggered by DNA damage. In terms of processing, ubiquitinated by SMURF2, leading to proteasomal degradation. Ubiquitinated by NEDD4, leading to proteasomal degradation. Post-translationally, following DNA damage, phosphorylated by HIPK2 which promotes DAZAP2 localization to the nucleus, reduces interaction of DAZAP2 with HIPK2 and SIAH1, and prevents DAZAP2-dependent ubiquitination of HIPK2 by E3 ubiquitin-protein ligase SIAH1 and subsequent HIPK2 proteasomal degradation.

The protein resides in the cytoplasm. Its subcellular location is the nucleus. The protein localises to the nucleus speckle. It is found in the nuclear body. It localises to the stress granule. Its function is as follows. In unstressed cells, promotes SIAH1-mediated polyubiquitination and degradation of the serine/threonine-protein kinase HIPK2, probably by acting as a loading factor that potentiates complex formation between HIPK2 and ubiquitin ligase SIAH1. In response to DNA damage, localizes to the nucleus following phosphorylation by HIPK2 and modulates the expression of a subset of TP53/p53 target genes by binding to TP53 at target gene promoters. This limits the expression of a number of cell death-mediating TP53 target genes, reducing DNA damage-induced cell death. Enhances the binding of transcription factor TCF7L2/TCF4, a Wnt signaling pathway effector, to the promoters of target genes. Plays a role in stress granule formation. The chain is DAZ-associated protein 2 from Rattus norvegicus (Rat).